A 143-amino-acid polypeptide reads, in one-letter code: Transcriptional regulator MraZ (143 aa).

SpoVT-AbrB domains follow at residues 5-47 (EYFH…PVSA) and 76-119 (ASNQ…DKEK).

The protein belongs to the MraZ family. As to quaternary structure, forms oligomers.

It is found in the cytoplasm. It localises to the nucleoid. This is Transcriptional regulator MraZ from Finegoldia magna (strain ATCC 29328 / DSM 20472 / WAL 2508) (Peptostreptococcus magnus).